The following is a 63-amino-acid chain: Cytochrome c oxidase subunit 5C (63 aa).

Residues 16-34 (VVKEIFIGLTLGLVAGGMW) form a helical membrane-spanning segment.

This sequence belongs to the cytochrome c oxidase subunit 5C family.

The protein localises to the mitochondrion inner membrane. Its function is as follows. This protein is one of the nuclear-coded polypeptide chains of cytochrome c oxidase, the terminal oxidase in mitochondrial electron transport. The protein is Cytochrome c oxidase subunit 5C (COX5C) of Hordeum vulgare (Barley).